Reading from the N-terminus, the 256-residue chain is Hydroxyacylglutathione hydrolase (256 aa).

Positions 56, 58, 60, 61, 114, 133, and 171 each coordinate Zn(2+).

This sequence belongs to the metallo-beta-lactamase superfamily. Glyoxalase II family. Monomer. Requires Zn(2+) as cofactor.

It catalyses the reaction an S-(2-hydroxyacyl)glutathione + H2O = a 2-hydroxy carboxylate + glutathione + H(+). Its pathway is secondary metabolite metabolism; methylglyoxal degradation; (R)-lactate from methylglyoxal: step 2/2. In terms of biological role, thiolesterase that catalyzes the hydrolysis of S-D-lactoyl-glutathione to form glutathione and D-lactic acid. This chain is Hydroxyacylglutathione hydrolase, found in Rhodobacter capsulatus (Rhodopseudomonas capsulata).